Consider the following 291-residue polypeptide: N-acetylmannosamine kinase (291 aa).

ATP contacts are provided by residues 5-12 (AIDIGGTK) and 132-139 (GVGGGVVS). Zn(2+) is bound by residues H156, C166, C168, and C173.

It belongs to the ROK (NagC/XylR) family. NanK subfamily. As to quaternary structure, homodimer.

It carries out the reaction an N-acyl-D-mannosamine + ATP = an N-acyl-D-mannosamine 6-phosphate + ADP + H(+). It functions in the pathway amino-sugar metabolism; N-acetylneuraminate degradation; D-fructose 6-phosphate from N-acetylneuraminate: step 2/5. Its function is as follows. Catalyzes the phosphorylation of N-acetylmannosamine (ManNAc) to ManNAc-6-P. The chain is N-acetylmannosamine kinase from Escherichia fergusonii (strain ATCC 35469 / DSM 13698 / CCUG 18766 / IAM 14443 / JCM 21226 / LMG 7866 / NBRC 102419 / NCTC 12128 / CDC 0568-73).